Here is a 59-residue protein sequence, read N- to C-terminus: Ferredoxin-2 (59 aa).

4Fe-4S ferredoxin-type domains lie at 3 to 32 (YSVI…LQNG) and 33 to 59 (KAVP…AIVE). 8 residues coordinate [4Fe-4S] cluster: Cys12, Cys15, Cys18, Cys22, Cys42, Cys45, Cys48, and Cys52.

As to quaternary structure, homodimer. Requires [4Fe-4S] cluster as cofactor.

It is found in the periplasm. Ferredoxins are iron-sulfur proteins that transfer electrons in a wide variety of metabolic reactions. This chain is Ferredoxin-2, found in Desulfomicrobium norvegicum (strain DSM 1741 / NCIMB 8310) (Desulfovibrio baculatus (strain Norway 4)).